Consider the following 311-residue polypeptide: Ketoisovalerate oxidoreductase subunit VorB (311 aa).

Heterotetramer of one alpha, one beta, one delta and one gamma chain.

The enzyme catalyses 3-methyl-2-oxobutanoate + 2 oxidized [2Fe-2S]-[ferredoxin] + CoA = 2-methylpropanoyl-CoA + 2 reduced [2Fe-2S]-[ferredoxin] + CO2 + H(+). This chain is Ketoisovalerate oxidoreductase subunit VorB (vorB), found in Pyrococcus abyssi (strain GE5 / Orsay).